Reading from the N-terminus, the 229-residue chain is uncharacterized protein (229 aa).

To M.pneumoniae MPN_376 central region.

This is an uncharacterized protein from Mycoplasma pneumoniae (strain ATCC 29342 / M129 / Subtype 1) (Mycoplasmoides pneumoniae).